Here is a 115-residue protein sequence, read N- to C-terminus: NAD(P)H-quinone oxidoreductase subunit M (115 aa).

This sequence belongs to the complex I NdhM subunit family. NDH-1 can be composed of about 15 different subunits; different subcomplexes with different compositions have been identified which probably have different functions.

The protein resides in the cellular thylakoid membrane. It carries out the reaction a plastoquinone + NADH + (n+1) H(+)(in) = a plastoquinol + NAD(+) + n H(+)(out). The catalysed reaction is a plastoquinone + NADPH + (n+1) H(+)(in) = a plastoquinol + NADP(+) + n H(+)(out). NDH-1 shuttles electrons from an unknown electron donor, via FMN and iron-sulfur (Fe-S) centers, to quinones in the respiratory and/or the photosynthetic chain. The immediate electron acceptor for the enzyme in this species is believed to be plastoquinone. Couples the redox reaction to proton translocation, and thus conserves the redox energy in a proton gradient. Cyanobacterial NDH-1 also plays a role in inorganic carbon-concentration. This is NAD(P)H-quinone oxidoreductase subunit M from Prochlorococcus marinus (strain NATL1A).